Consider the following 64-residue polypeptide: Small ribosomal subunit protein bS21 (64 aa).

This sequence belongs to the bacterial ribosomal protein bS21 family.

The protein is Small ribosomal subunit protein bS21 of Sulfurihydrogenibium sp. (strain YO3AOP1).